Reading from the N-terminus, the 867-residue chain is Bifunctional cis-abienol synthase, chloroplastic (867 aa).

Residues 1–49 (MALPVYSLKSHIPITTIASAKMNYTPNKGMITANGRSRRIRLSPNKIVA) constitute a chloroplast transit peptide. Lysine 270 provides a ligand contact to substrate. The short motif at 403–406 (DIDD) is the DXDD motif element. Substrate is bound at residue lysine 490. Positions 622, 626, 763, 764, 767, and 771 each coordinate Mg(2+). The DDXXD motif signature appears at 622-626 (DDLYD).

The protein belongs to the terpene synthase family. Tpsd subfamily. It depends on Mg(2+) as a cofactor.

It is found in the plastid. The protein localises to the chloroplast. It carries out the reaction 8-hydroxycopalyl diphosphate = cis-abienol + diphosphate. It catalyses the reaction (2E,6E,10E)-geranylgeranyl diphosphate + H2O = 8-hydroxycopalyl diphosphate. It participates in terpene metabolism; oleoresin biosynthesis. Functionally, involved in the biosynthesis of cis-abienol, a labdane diterpene that can be used as synthesis precursor of ambergris substitution fragance products. Bifunctional class I/II enzyme in which both the bicyclization and water capture occur in the class II active site, resulting in an intermediary labda-13-en-8-ol diphosphate, which undergoes cleavage of the diphosphate group and final deprotonation at the class I active site. No activity with copalyl diphosphate as substrate. The chain is Bifunctional cis-abienol synthase, chloroplastic (CAS) from Abies balsamea (Balsam fir).